Here is a 588-residue protein sequence, read N- to C-terminus: Proline--tRNA ligase (588 aa).

The protein belongs to the class-II aminoacyl-tRNA synthetase family. ProS type 1 subfamily. Homodimer.

The protein localises to the cytoplasm. The catalysed reaction is tRNA(Pro) + L-proline + ATP = L-prolyl-tRNA(Pro) + AMP + diphosphate. Functionally, catalyzes the attachment of proline to tRNA(Pro) in a two-step reaction: proline is first activated by ATP to form Pro-AMP and then transferred to the acceptor end of tRNA(Pro). As ProRS can inadvertently accommodate and process non-cognate amino acids such as alanine and cysteine, to avoid such errors it has two additional distinct editing activities against alanine. One activity is designated as 'pretransfer' editing and involves the tRNA(Pro)-independent hydrolysis of activated Ala-AMP. The other activity is designated 'posttransfer' editing and involves deacylation of mischarged Ala-tRNA(Pro). The misacylated Cys-tRNA(Pro) is not edited by ProRS. The sequence is that of Proline--tRNA ligase from Corynebacterium glutamicum (strain R).